Consider the following 697-residue polypeptide: Elongation factor G (697 aa).

Residues 8–287 (ERVRNIGIAA…AVVDYLPAPT (280 aa)) form the tr-type G domain. GTP contacts are provided by residues 17–24 (AHIDAGKT), 81–85 (DTPGH), and 135–138 (NKMD).

This sequence belongs to the TRAFAC class translation factor GTPase superfamily. Classic translation factor GTPase family. EF-G/EF-2 subfamily.

It is found in the cytoplasm. Catalyzes the GTP-dependent ribosomal translocation step during translation elongation. During this step, the ribosome changes from the pre-translocational (PRE) to the post-translocational (POST) state as the newly formed A-site-bound peptidyl-tRNA and P-site-bound deacylated tRNA move to the P and E sites, respectively. Catalyzes the coordinated movement of the two tRNA molecules, the mRNA and conformational changes in the ribosome. The polypeptide is Elongation factor G (fusA) (Arthrospira platensis (Spirulina platensis)).